The primary structure comprises 77 residues: MSKNIYCVFLRKQAEGQDFQSYPGELGKHIFNNISKEAWAKWQQKQTMLINENKLNLISNTDRNFLEKEMIKFLFKS.

This sequence belongs to the Fe(2+)-trafficking protein family.

Its function is as follows. Could be a mediator in iron transactions between iron acquisition and iron-requiring processes, such as synthesis and/or repair of Fe-S clusters in biosynthetic enzymes. This Baumannia cicadellinicola subsp. Homalodisca coagulata protein is Probable Fe(2+)-trafficking protein.